The chain runs to 667 residues: DNA ligase (667 aa).

NAD(+) is bound by residues 32 to 36, 81 to 82, and Glu-110; these read DSEYD and SL. Lys-112 serves as the catalytic N6-AMP-lysine intermediate. NAD(+) is bound by residues Arg-133, Glu-167, Lys-283, and Lys-307. The Zn(2+) site is built by Cys-401, Cys-404, Cys-419, and Cys-424. The 82-residue stretch at 586–667 folds into the BRCT domain; that stretch reads EGHPEFSGKT…FVDKQNELNS (82 aa).

It belongs to the NAD-dependent DNA ligase family. LigA subfamily. It depends on Mg(2+) as a cofactor. Mn(2+) serves as cofactor.

It carries out the reaction NAD(+) + (deoxyribonucleotide)n-3'-hydroxyl + 5'-phospho-(deoxyribonucleotide)m = (deoxyribonucleotide)n+m + AMP + beta-nicotinamide D-nucleotide.. DNA ligase that catalyzes the formation of phosphodiester linkages between 5'-phosphoryl and 3'-hydroxyl groups in double-stranded DNA using NAD as a coenzyme and as the energy source for the reaction. It is essential for DNA replication and repair of damaged DNA. The chain is DNA ligase from Staphylococcus aureus (strain bovine RF122 / ET3-1).